Here is a 1551-residue protein sequence, read N- to C-terminus: Dual oxidase 1 (1551 aa).

The first 21 residues, 1-21, serve as a signal peptide directing secretion; sequence MAVYSAVAWILLFGVLASLGA. Topologically, residues 22–596 are extracellular; the sequence is QNPVSWEVQR…YFKGSGFGFG (575 aa). The peroxidase-like; mediates peroxidase activity stretch occupies residues 26 to 593; it reads SWEVQRFDGW…VRDYFKGSGF (568 aa). N-linked (GlcNAc...) asparagine glycans are attached at residues Asn-94, Asn-342, Asn-354, Asn-461, and Asn-534. The helical transmembrane segment at 597–617 threads the bilayer; sequence LTIGTLCCFPLVSLLSAWIVA. Residues 618 to 1044 are Cytoplasmic-facing; sequence RLRMRNFKRL…KRFIENYRRH (427 aa). EF-hand domains lie at 815-850, 851-886, and 895-930; these read PQDM…FMKG, SPEE…FIEI, and QLAE…HDSD. Positions 828, 830, 832, 834, 839, 864, 866, 868, and 875 each coordinate Ca(2+). Residues 956 to 1248 are interaction with TXNDC11; it reads YISQEKICPS…GSFALIQMPR (293 aa). The helical transmembrane segment at 1045–1065 threads the bilayer; the sequence is IGCVAVFYTITGALFLERAYY. Over 1066-1080 the chain is Extracellular; it reads YAFAAHHSGITDTTR. A helical transmembrane segment spans residues 1081–1101; it reads VGIILSRGTAASISFMFSYIL. Positions 1087 to 1269 constitute a Ferric oxidoreductase domain; that stretch reads RGTAASISFM…YVGDKLVSLS (183 aa). At 1102–1136 the chain is on the cytoplasmic side; that stretch reads LTMCRNLITFLRETFLNRYIPFDAAVDFHRFIAST. The chain crosses the membrane as a helical span at residues 1137 to 1157; it reads AIILTVLHSAGHVVNVYLFSI. At 1158–1188 the chain is on the extracellular side; sequence SPLSVLSCLFPDLFHDDGSEFPQKYYWWFFQ. The helical transmembrane segment at 1189–1209 threads the bilayer; it reads TVPGLTGVLLLLALAIMYVFA. Residues 1210–1226 are Cytoplasmic-facing; it reads SHHFRRRSFRGFWLTHH. A helical transmembrane segment spans residues 1227-1247; it reads LYIFLYILLIIHGSFALIQMP. A topological domain (extracellular) is located at residue Arg-1248. A helical membrane pass occupies residues 1249 to 1269; sequence FHIFFLVPAIIYVGDKLVSLS. The 107-residue stretch at 1270-1376 folds into the FAD-binding FR-type domain; it reads RKKVEISVVK…DGPFGEGHQE (107 aa). Residues 1270–1551 lie on the Cytoplasmic side of the membrane; that stretch reads RKKVEISVVK…THFSHHYENF (282 aa).

It in the N-terminal section; belongs to the peroxidase family. As to quaternary structure, interacts with TXNDC11, TPO and CYBA. Post-translationally, N-glycosylated. In terms of tissue distribution, expressed in thyrocytes (at protein level).

It is found in the apical cell membrane. The enzyme catalyses NADH + O2 + H(+) = H2O2 + NAD(+). It carries out the reaction NADPH + O2 + H(+) = H2O2 + NADP(+). The protein operates within hormone biosynthesis; thyroid hormone biosynthesis. With respect to regulation, the NADPH oxidase activity is calcium-dependent. Peroxidase activity is inhibited by aminobenzohydrazide. Generates hydrogen peroxide which is required for the activity of thyroid peroxidase/TPO and lactoperoxidase/LPO. Plays a role in thyroid hormones synthesis and lactoperoxidase-mediated antimicrobial defense at the surface of mucosa. May have its own peroxidase activity through its N-terminal peroxidase-like domain. The protein is Dual oxidase 1 (Duox1) of Rattus norvegicus (Rat).